Reading from the N-terminus, the 236-residue chain is Sugar fermentation stimulation protein homolog (236 aa).

The protein belongs to the SfsA family.

This Pseudomonas fluorescens (strain SBW25) protein is Sugar fermentation stimulation protein homolog.